We begin with the raw amino-acid sequence, 1018 residues long: Cytadherence high molecular weight protein 1 (1018 aa).

Coiled coils occupy residues 782-815 and 849-880; these read NRFLLIKKELQAELTRLIEENEQLKAEFLNAKDL and ELVRNIQKAILENESKIKNIQITLKELKAVYK.

Post-translationally, phosphorylated mainly on serine residues.

The protein localises to the cell projection. It is found in the attachment organelle membrane. Functionally, component of the cytoskeleton-like structure which stabilizes the shape of the wall-less Mycoplasma. This cytoskeleton-like network of accessory proteins containing HMW proteins 1 to 5 allows the proper anchoring of cytadhesin proteins in the mycoplasmal membrane at the attachment organelle. This chain is Cytadherence high molecular weight protein 1 (hmw1), found in Mycoplasma pneumoniae (strain ATCC 29342 / M129 / Subtype 1) (Mycoplasmoides pneumoniae).